Here is a 331-residue protein sequence, read N- to C-terminus: Putative phosphoribosylaminoimidazole-succinocarboxamide synthase (331 aa).

It belongs to the SAICAR synthetase family. Highly divergent.

It catalyses the reaction 5-amino-1-(5-phospho-D-ribosyl)imidazole-4-carboxylate + L-aspartate + ATP = (2S)-2-[5-amino-1-(5-phospho-beta-D-ribosyl)imidazole-4-carboxamido]succinate + ADP + phosphate + 2 H(+). It participates in purine metabolism; IMP biosynthesis via de novo pathway; 5-amino-1-(5-phospho-D-ribosyl)imidazole-4-carboxamide from 5-amino-1-(5-phospho-D-ribosyl)imidazole-4-carboxylate: step 1/2. The chain is Putative phosphoribosylaminoimidazole-succinocarboxamide synthase (purC) from Archaeoglobus fulgidus (strain ATCC 49558 / DSM 4304 / JCM 9628 / NBRC 100126 / VC-16).